The sequence spans 99 residues: Plastocyanin B'/B'' (99 aa).

A Plastocyanin-like domain is found at 1-99; the sequence is IEVLLGSDDG…AGMVGKVTVN (99 aa). Positions 37, 84, 87, and 92 each coordinate Cu cation.

Belongs to the plastocyanin family. Requires Cu(2+) as cofactor.

It is found in the plastid. The protein resides in the chloroplast thylakoid membrane. In terms of biological role, participates in electron transfer between P700 and the cytochrome b6-f complex in photosystem I. The protein is Plastocyanin B'/B'' of Nicotiana tabacum (Common tobacco).